We begin with the raw amino-acid sequence, 320 residues long: Cytochrome f (320 aa).

A signal peptide spans 1–35 (MQNRNTFLGVKEQITRSIFVSIMIYVITRASISNA). Heme contacts are provided by tyrosine 36, cysteine 56, cysteine 59, and histidine 60. Residues 286–306 (IQGLLFFLASVILAQIFLVLK) form a helical membrane-spanning segment.

It belongs to the cytochrome f family. The 4 large subunits of the cytochrome b6-f complex are cytochrome b6, subunit IV (17 kDa polypeptide, petD), cytochrome f and the Rieske protein, while the 4 small subunits are PetG, PetL, PetM and PetN. The complex functions as a dimer. Requires heme as cofactor.

The protein localises to the plastid. Its subcellular location is the chloroplast thylakoid membrane. Component of the cytochrome b6-f complex, which mediates electron transfer between photosystem II (PSII) and photosystem I (PSI), cyclic electron flow around PSI, and state transitions. The chain is Cytochrome f from Dioscorea elephantipes (Elephant's foot yam).